The following is a 225-amino-acid chain: Leucyl/phenylalanyl-tRNA--protein transferase (225 aa).

The protein belongs to the L/F-transferase family.

It localises to the cytoplasm. The enzyme catalyses N-terminal L-lysyl-[protein] + L-leucyl-tRNA(Leu) = N-terminal L-leucyl-L-lysyl-[protein] + tRNA(Leu) + H(+). The catalysed reaction is N-terminal L-arginyl-[protein] + L-leucyl-tRNA(Leu) = N-terminal L-leucyl-L-arginyl-[protein] + tRNA(Leu) + H(+). It carries out the reaction L-phenylalanyl-tRNA(Phe) + an N-terminal L-alpha-aminoacyl-[protein] = an N-terminal L-phenylalanyl-L-alpha-aminoacyl-[protein] + tRNA(Phe). Functions in the N-end rule pathway of protein degradation where it conjugates Leu, Phe and, less efficiently, Met from aminoacyl-tRNAs to the N-termini of proteins containing an N-terminal arginine or lysine. The chain is Leucyl/phenylalanyl-tRNA--protein transferase from Nitrobacter winogradskyi (strain ATCC 25391 / DSM 10237 / CIP 104748 / NCIMB 11846 / Nb-255).